A 416-amino-acid chain; its full sequence is Creatine kinase U-type, mitochondrial (416 aa).

A mitochondrion-targeting transit peptide spans 1-39 (MAGPFSRLLSARPGLRLLALAGAGSLAAGFLLRSEPVRA). Residues 40–64 (ASERRRLYPPSAEYPDLRKHNNCMA) are cardiolipin-binding. The 87-residue stretch at 45-131 (RLYPPSAEYP…FDPVIQERHN (87 aa)) folds into the Phosphagen kinase N-terminal domain. The residue at position 151 (S151) is a Phosphoserine. The Phosphagen kinase C-terminal domain maps to 158-400 (YVLSSRVRTG…NFLIDCERRL (243 aa)). 161-165 (SSRVR) is a binding site for ATP. Residue S196 is modified to Phosphoserine. Phosphothreonine is present on T213. Residue H224 participates in ATP binding. S232 is subject to Phosphoserine. ATP is bound by residues R269, R325, and 353–358 (RGTGGV). At T355 the chain carries Phosphothreonine. The residue at position 365 (S365) is a Phosphoserine. D368 contributes to the ATP binding site.

It belongs to the ATP:guanido phosphotransferase family. As to quaternary structure, exists as an octamer composed of four MTCK homodimers.

It localises to the mitochondrion inner membrane. It catalyses the reaction creatine + ATP = N-phosphocreatine + ADP + H(+). Its function is as follows. Reversibly catalyzes the transfer of phosphate between ATP and various phosphogens (e.g. creatine phosphate). Creatine kinase isoenzymes play a central role in energy transduction in tissues with large, fluctuating energy demands, such as skeletal muscle, heart, brain and spermatozoa. The polypeptide is Creatine kinase U-type, mitochondrial (CKMT1) (Bos taurus (Bovine)).